We begin with the raw amino-acid sequence, 498 residues long: Probable cytosol aminopeptidase (498 aa).

K271 and D276 together coordinate Mn(2+). The active site involves K283. 3 residues coordinate Mn(2+): D294, D353, and E355. R357 is an active-site residue.

It belongs to the peptidase M17 family. Mn(2+) is required as a cofactor.

Its subcellular location is the cytoplasm. It catalyses the reaction Release of an N-terminal amino acid, Xaa-|-Yaa-, in which Xaa is preferably Leu, but may be other amino acids including Pro although not Arg or Lys, and Yaa may be Pro. Amino acid amides and methyl esters are also readily hydrolyzed, but rates on arylamides are exceedingly low.. The enzyme catalyses Release of an N-terminal amino acid, preferentially leucine, but not glutamic or aspartic acids.. In terms of biological role, presumably involved in the processing and regular turnover of intracellular proteins. Catalyzes the removal of unsubstituted N-terminal amino acids from various peptides. This is Probable cytosol aminopeptidase from Bordetella petrii (strain ATCC BAA-461 / DSM 12804 / CCUG 43448).